Reading from the N-terminus, the 108-residue chain is Biogenesis of lysosome-related organelles complex 1 subunit CNL1 (108 aa).

This sequence belongs to the BLOC1S4 family. As to quaternary structure, component of the biogenesis of lysosome-related organelles complex-1 (BLOC-1).

It is found in the cytoplasm. In terms of biological role, component of the biogenesis of lysosome-related organelles complex-1 (BLOC-1), a complex that is involved in endosomal cargo sorting. The polypeptide is Biogenesis of lysosome-related organelles complex 1 subunit CNL1 (CLN1) (Zygosaccharomyces rouxii (strain ATCC 2623 / CBS 732 / NBRC 1130 / NCYC 568 / NRRL Y-229)).